Consider the following 135-residue polypeptide: uncharacterized protein (135 aa).

Residues 25–123 (CPIQHVVDLL…LGSDWLEQES (99 aa)) enclose the HTH hxlR-type domain.

This is an uncharacterized protein from Synechocystis sp. (strain ATCC 27184 / PCC 6803 / Kazusa).